The sequence spans 454 residues: MKISSFRKGRWLGALALFAVVCWSMADAAVDRIVAVVDDGVILESELVRKVDEIKRSLRASRASLPPDSVLVRQVLERMIVDKIQIQMAEKMGIQVDDDTLRMAVSQIAQRNNLTPDQFRRSLAREGIDYGDFLDQVRSEIAMGRLRASQINNQIKISDREVEHYLEAQGGSGAVADREYRLGHILIATPREASPDEVKKARERADRVVKELKAGLDFKDASIRYSDDPQALEGGDLGWRKLSEIPSHIAEVVGGMKDGEVSDPIRSPGGYHIVKMLAMRGVGEAKLTKTHVRHILIRPNEVLSDEDAKNKLLALKTRIENGDDFAELARGHSDDKGSAIKGGDLGWVKPGALVPPFEEAMNALDENQLSDPVQTQFGWHLIQVLERQESSDTNEVLKNRARDELFKRKVDEETELWLRKIRDEAYVEIRLDETPASPGEDAPAGEDSPETFMR.

An N-terminal signal peptide occupies residues 1-28; that stretch reads MKISSFRKGRWLGALALFAVVCWSMADA. PpiC domains follow at residues 177–278 and 287–386; these read DREY…KMLA and LTKT…QVLE. The segment at 431-454 is disordered; sequence LDETPASPGEDAPAGEDSPETFMR. The segment covering 443–454 has biased composition (acidic residues); it reads PAGEDSPETFMR.

It localises to the periplasm. It carries out the reaction [protein]-peptidylproline (omega=180) = [protein]-peptidylproline (omega=0). In terms of biological role, chaperone involved in the correct folding and assembly of outer membrane proteins. Recognizes specific patterns of aromatic residues and the orientation of their side chains, which are found more frequently in integral outer membrane proteins. May act in both early periplasmic and late outer membrane-associated steps of protein maturation. This is Chaperone SurA from Methylococcus capsulatus (strain ATCC 33009 / NCIMB 11132 / Bath).